We begin with the raw amino-acid sequence, 375 residues long: Cytochrome P450 monooxygenase ACRTS1 (375 aa).

Heme is bound at residue C321.

Belongs to the cytochrome P450 family. Heme serves as cofactor.

Its pathway is mycotoxin biosynthesis. In terms of biological role, cytochrome P450 monooxygenase; part of the gene cluster that mediates the biosynthesis of the host-selective toxins (HSTs) ACR-toxins responsible for brown spot of rough lemon disease by the rough lemon pathotype. ACR-toxins cause uncoupling of mitochondrial oxidative-phosphorylation similar to that of classic protonophore. The structure of the major form of ACR-toxin (ACR-toxin I) consists of an alpha-dihydropyrone ring in a 19-carbon polyalcohol, a typical polyketide structure. Minor toxins were characterized as having a pyrone ring with polyalcohol side chains different in length and showing weaker toxicity. The highly reducing polyketide synthase ACRTS2 has all necessary enzymatic domains for multiple cycles of condensation and beta-keto processing. The cytochrome P450 monooxygenase ACRTS1 has also been shown to be essential for ACR-toxin biosynthesis, however its exact role in the pathway has not been elucidated yet. The polypeptide is Cytochrome P450 monooxygenase ACRTS1 (Alternaria alternata (Alternaria rot fungus)).